Reading from the N-terminus, the 144-residue chain is Protein NrdI (144 aa).

This sequence belongs to the NrdI family.

In terms of biological role, probably involved in ribonucleotide reductase function. The polypeptide is Protein NrdI (Streptococcus pyogenes serotype M4 (strain MGAS10750)).